The primary structure comprises 143 residues: SsrA-binding protein (143 aa).

It belongs to the SmpB family.

It localises to the cytoplasm. Its function is as follows. Required for rescue of stalled ribosomes mediated by trans-translation. Binds to transfer-messenger RNA (tmRNA), required for stable association of tmRNA with ribosomes. tmRNA and SmpB together mimic tRNA shape, replacing the anticodon stem-loop with SmpB. tmRNA is encoded by the ssrA gene; the 2 termini fold to resemble tRNA(Ala) and it encodes a 'tag peptide', a short internal open reading frame. During trans-translation Ala-aminoacylated tmRNA acts like a tRNA, entering the A-site of stalled ribosomes, displacing the stalled mRNA. The ribosome then switches to translate the ORF on the tmRNA; the nascent peptide is terminated with the 'tag peptide' encoded by the tmRNA and targeted for degradation. The ribosome is freed to recommence translation, which seems to be the essential function of trans-translation. The sequence is that of SsrA-binding protein from Mycoplasmoides gallisepticum (strain R(low / passage 15 / clone 2)) (Mycoplasma gallisepticum).